Consider the following 968-residue polypeptide: RNA polymerase-associated protein RapA (968 aa).

The Helicase ATP-binding domain occupies 164–334 (DVGRRHAPRV…FARLRLLDPN (171 aa)). Residue 177-184 (DEVGLGKT) coordinates ATP. The short motif at 280 to 283 (DEAH) is the DEAH box element. The 196-residue stretch at 490 to 685 (RVEWLMGYLT…ALKAQLEQGR (196 aa)) folds into the Helicase C-terminal domain.

This sequence belongs to the SNF2/RAD54 helicase family. RapA subfamily. In terms of assembly, interacts with the RNAP. Has a higher affinity for the core RNAP than for the holoenzyme. Its ATPase activity is stimulated by binding to RNAP.

Transcription regulator that activates transcription by stimulating RNA polymerase (RNAP) recycling in case of stress conditions such as supercoiled DNA or high salt concentrations. Probably acts by releasing the RNAP, when it is trapped or immobilized on tightly supercoiled DNA. Does not activate transcription on linear DNA. Probably not involved in DNA repair. The chain is RNA polymerase-associated protein RapA from Salmonella typhimurium (strain LT2 / SGSC1412 / ATCC 700720).